The sequence spans 430 residues: uncharacterized protein (430 aa).

The first 19 residues, 1–19 (MKILLFVVLFFNVLVGIYS), serve as a signal peptide directing secretion. An N-linked (GlcNAc...) asparagine glycan is attached at asparagine 39. The interval 119–408 (LDPNSSPSPS…ELLEKNSDGN (290 aa)) is disordered. Pro residues predominate over residues 124–168 (SPSPSPSPSPSPSPSPSPSPSPSPSPSPSPSPSPSPSPSPSPSPS). Composition is skewed to low complexity over residues 169–253 (PSSS…TPSQ) and 263–285 (PTPT…TQTP). The segment covering 286-303 (ISSRPMSISTEKPSSSEE) has biased composition (polar residues). Asparagine 312 is a glycosylation site (N-linked (GlcNAc...) asparagine). Positions 316–325 (SEDKKKDSES) are enriched in basic and acidic residues. Low complexity predominate over residues 326–370 (KSSQSESPSPSASASESESASESASASTSVSVSASPLPIMDSSSS). N-linked (GlcNAc...) asparagine glycosylation is present at asparagine 408.

The protein resides in the secreted. This is an uncharacterized protein from Dictyostelium discoideum (Social amoeba).